We begin with the raw amino-acid sequence, 503 residues long: MEEFQGYLELDRSQQHDFLYPLIFREYIYALAHDRGLNRSVLLDNVSYDKKSSLLIIKRLISRMYQQNHFIISVNDSNQNKFFGYNKNLYSQMISEGFAVIVEIPFSLRLVSSLEETETVKSYNLRSIHSIFPFFEDKFPHLNYASDVLIPYPIHLEILVQTLRYCVKDPSSLHLLRLFLHEYYNWNTLITPKKSIFAKSNQRLFLLLYNSYVCEYESILLFLRNQSNHLRLTSSGILFERIRFYEKIKYPVEEVFANDFPATLWFFKDPFIQYVRYQGKSILASKDTPLLMNKWKYYLVHFWQCHFYVWSQPGRIHINQLSKHSFDFLGYLSSIRPNISVVRSQLLENSFLMDNAMKKLDTLFPIIPMIGSLAKVKFCNTSGHPISKSSWADSSDSDIIDRFVRIGENLSHYYSGSSKKKSLYRIKYILRLSCVKTLARKHKSTVRTFLKRLGPKLLDEFFTEEEQIFSLLFPRTSSTLKRFYRGRIWYLDILCINDLVNHE.

Belongs to the intron maturase 2 family. MatK subfamily.

The protein localises to the plastid. Its subcellular location is the chloroplast. Its function is as follows. Usually encoded in the trnK tRNA gene intron. Probably assists in splicing its own and other chloroplast group II introns. The protein is Maturase K of Rosa foetida (Austrian briar).